A 512-amino-acid chain; its full sequence is Ribonuclease Y (512 aa).

Residues 3 to 23 (FQIILVVIISALVGLVIGFFI) form a helical membrane-spanning segment. The KH domain occupies 202–265 (TVAVIPLPND…EVARLALERL (64 aa)). An HD domain is found at 328–421 (VLKHSIEVCH…VQAADAISAA (94 aa)).

Belongs to the RNase Y family.

It is found in the cell membrane. Its function is as follows. Endoribonuclease that initiates mRNA decay. The protein is Ribonuclease Y of Desulforamulus reducens (strain ATCC BAA-1160 / DSM 100696 / MI-1) (Desulfotomaculum reducens).